The following is a 90-amino-acid chain: DNA-binding protein HU-alpha (90 aa).

The protein belongs to the bacterial histone-like protein family. Heterodimer of an alpha and a beta chain.

Histone-like DNA-binding protein which is capable of wrapping DNA to stabilize it, and thus to prevent its denaturation under extreme environmental conditions. In Vibrio proteolyticus (Aeromonas proteolytica), this protein is DNA-binding protein HU-alpha (hupA).